Reading from the N-terminus, the 179-residue chain is Large ribosomal subunit protein uL5 (179 aa).

The protein belongs to the universal ribosomal protein uL5 family. In terms of assembly, part of the 50S ribosomal subunit; part of the 5S rRNA/L5/L18/L25 subcomplex. Contacts the 5S rRNA and the P site tRNA. Forms a bridge to the 30S subunit in the 70S ribosome.

Its function is as follows. This is one of the proteins that bind and probably mediate the attachment of the 5S RNA into the large ribosomal subunit, where it forms part of the central protuberance. In the 70S ribosome it contacts protein S13 of the 30S subunit (bridge B1b), connecting the 2 subunits; this bridge is implicated in subunit movement. Contacts the P site tRNA; the 5S rRNA and some of its associated proteins might help stabilize positioning of ribosome-bound tRNAs. The chain is Large ribosomal subunit protein uL5 from Francisella tularensis subsp. novicida (strain U112).